The chain runs to 146 residues: Ribosome-binding factor A (146 aa).

Over residues 122–134 the composition is skewed to polar residues; the sequence is QQQFGSAEDVTSN. The disordered stretch occupies residues 122–146; it reads QQQFGSAEDVTSNDIDEADDTEGKA. The segment covering 135 to 146 has biased composition (acidic residues); it reads DIDEADDTEGKA.

The protein belongs to the RbfA family. Monomer. Binds 30S ribosomal subunits, but not 50S ribosomal subunits or 70S ribosomes.

Its subcellular location is the cytoplasm. In terms of biological role, one of several proteins that assist in the late maturation steps of the functional core of the 30S ribosomal subunit. Associates with free 30S ribosomal subunits (but not with 30S subunits that are part of 70S ribosomes or polysomes). Required for efficient processing of 16S rRNA. May interact with the 5'-terminal helix region of 16S rRNA. This is Ribosome-binding factor A from Shewanella sp. (strain ANA-3).